Consider the following 277-residue polypeptide: NLP effector protein Pc109174 (277 aa).

The first 19 residues, 1 to 19 (MNLVPALVLLLALAQTVLG), serve as a signal peptide directing secretion. A Hepta-peptide GHRHDWE motif motif is present at residues 119–125 (KSRHLWA). Asparagine 199 is a glycosylation site (N-linked (GlcNAc...) asparagine).

Belongs to the Necrosis inducing protein (NPP1) family.

It is found in the secreted. Its function is as follows. Secreted effector that contributes strongly to virulence during infection by P.capsici. Induces cell death in the Solanaceae, including hot pepper. The protein is NLP effector protein Pc109174 of Phytophthora capsici.